Reading from the N-terminus, the 150-residue chain is UPF0179 protein Mbur_1033 (150 aa).

The protein belongs to the UPF0179 family.

The protein is UPF0179 protein Mbur_1033 of Methanococcoides burtonii (strain DSM 6242 / NBRC 107633 / OCM 468 / ACE-M).